The chain runs to 1483 residues: Cystic fibrosis transmembrane conductance regulator (1483 aa).

At 1–77 (MQRSPLEKAS…KLINALRRCF (77 aa)) the chain is on the cytoplasmic side. A helical transmembrane segment spans residues 78 to 98 (FWKFMFYGILLYLGEVTKAVQ). An ABC transmembrane type-1 1 domain is found at 81 to 365 (FMFYGILLYL…WAVQTWYDSL (285 aa)). The Extracellular segment spans residues 99–122 (PLLLGRIIASYDPDNKVERSIAIY). A helical transmembrane segment spans residues 123–146 (LGIGLCLLFVVRTLLLHPAIFGLH). Topologically, residues 147-195 (HIGMQMRIAMFSLIYKKTLKLSSRVLDKISIGQLISLLSNNLNKFDEGL) are cytoplasmic. Residues 196-216 (ALAHFVWIVPLQVTLLMGLLW) form a helical membrane-spanning segment. Topologically, residues 217-222 (ELLQAS) are extracellular. The helical transmembrane segment at 223–243 (AFCGLAFLIIVAFYQAGLGRM) threads the bilayer. The Cytoplasmic portion of the chain corresponds to 244–298 (MMKYRDKRGGKINERLVITSEMIENIQSVKAYCWEEAMEKMIENLRQTELKLTRK). The chain crosses the membrane as a helical span at residues 299–319 (AAYVRYCNSSAFFFSGFFVVF). Residues 320-339 (LSVLPYALMKGIILRKIFTT) are Extracellular-facing. Residues 340–358 (ISFCIVLRMAVTRQFPWAV) traverse the membrane as a helical segment. At 359–859 (QTWYDSLGAI…YLRYITIHKS (501 aa)) the chain is on the cytoplasmic side. ATP is bound by residues Trp-401, Ser-434, 458-465 (GSTGAGKT), and Gln-493. The ABC transporter 1 domain maps to 423–646 (NGDNSLFFSN…RPDFSSKLMG (224 aa)). Cys-524 carries the S-palmitoyl cysteine lipid modification. Phosphoserine occurs at positions 549 and 660. Residues 654-832 (SAERRNSILT…EEINEEDLKE (179 aa)) form a disordered R region region. Ser-670 is modified (phosphoserine; by PKA). Phosphoserine is present on Ser-686. Residue Lys-688 forms a Glycyl lysine isopeptide (Lys-Gly) (interchain with G-Cter in ubiquitin) linkage. Residues Ser-700 and Ser-712 each carry the phosphoserine modification. Thr-717 is subject to Phosphothreonine. Ser-737, Ser-768, Ser-791, Ser-796, and Ser-814 each carry phosphoserine. A helical membrane pass occupies residues 860 to 880 (LIFVLIWCLIIFLAEVAVSLV). The ABC transmembrane type-1 2 domain occupies 860–1157 (LIFVLIWCLI…AVNSSIDVDS (298 aa)). The Extracellular portion of the chain corresponds to 881–920 (FLLLFEKSPRQDTGNVTKSSNNSSYGVIITNTSSYYIIYI). Residues Asn-895, Asn-901, Asn-902, and Asn-911 are each glycosylated (N-linked (GlcNAc...) asparagine). Residues 921–941 (YVGVADTLLALGLLRGLPLVH) traverse the membrane as a discontinuously helical segment. Residues 942-992 (TLITASKILHHKMLHSVLQAPMSTLNTLKAGGILNRFSKDIAILDDLLPLT) are Cytoplasmic-facing. The helical transmembrane segment at 993-1013 (IFDFIQLILIVIGAVIVVSVL) threads the bilayer. Residues 1014–1015 (EP) are Extracellular-facing. A helical transmembrane segment spans residues 1016 to 1036 (YIFLATVPVIIAFVMLRAYFL). The Cytoplasmic portion of the chain corresponds to 1037 to 1097 (HTSQQLKQLE…TANWFLYLST (61 aa)). The helical transmembrane segment at 1098-1118 (LRWFQMRIEMIFVIFFIAVTF) threads the bilayer. The Extracellular portion of the chain corresponds to 1119 to 1132 (ISILTTGDGEGRVG). A helical transmembrane segment spans residues 1133 to 1153 (IILTLAMNIMNTLQWAVNSSI). Residues 1154–1483 (DVDSLMRSVS…TEEEVQETRL (330 aa)) are Cytoplasmic-facing. An ABC transporter 2 domain is found at 1213-1446 (MTVKDLTAKY…KSLFRQAISN (234 aa)). Residues Tyr-1222 and 1247 to 1254 (GRTGSGKS) each bind ATP. Positions 1389 to 1483 (RTIKQAFADC…TEEEVQETRL (95 aa)) are interaction with GORASP2. A lipid anchor (S-palmitoyl cysteine) is attached at Cys-1398. A phosphoserine mark is found at Ser-1447 and Ser-1459. Residues 1455-1465 (HRNSSKHKSRS) show a composition bias toward basic residues. Residues 1455–1483 (HRNSSKHKSRSKIAALKEETEEEVQETRL) form a disordered region. Positions 1473–1483 (ETEEEVQETRL) are enriched in acidic residues. A PDZ-binding motif is present at residues 1481-1483 (TRL).

The protein belongs to the ABC transporter superfamily. ABCC family. CFTR transporter (TC 3.A.1.202) subfamily. In terms of assembly, monomer; does not require oligomerization for channel activity. May form oligomers in the membrane. Interacts with SLC26A3, SLC26A6 and NHERF1. Interacts with SHANK2. Interacts with MYO6. Interacts (via C-terminus) with GOPC (via PDZ domain); this promotes CFTR internalization and thereby decreases channel activity. Interacts with SLC4A7 through NHERF1. Found in a complex with MYO5B and RAB11A. Interacts with ANO1. Interacts with SLC26A8. Interacts with AHCYL1; the interaction increases CFTR activity. Interacts with CSE1L. The core-glycosylated form interacts with GORASP2 (via PDZ GRASP-type 1 domain) in respone to ER stress. Interacts with MARCHF2; the interaction leads to CFTR ubiqtuitination and degradation. Interacts with ADGRG2. In terms of processing, N-glycosylated. Post-translationally, phosphorylated; cAMP treatment promotes phosphorylation and activates the channel. Dephosphorylation decreases the ATPase activity (in vitro). Phosphorylation at PKA sites activates the channel. Phosphorylation at PKC sites enhances the response to phosphorylation by PKA. Phosphorylated by AMPK; this inhibits channel activity. Ubiquitinated, leading to its degradation in the lysosome. Deubiquitination by USP10 in early endosomes enhances its endocytic recycling to the cell membrane. Ubiquitinated by RNF185 during ER stress. Ubiquitinated by MARCHF2.

The protein localises to the apical cell membrane. It localises to the early endosome membrane. The protein resides in the cell membrane. It is found in the recycling endosome membrane. Its subcellular location is the endoplasmic reticulum membrane. The protein localises to the nucleus. It catalyses the reaction ATP + H2O + closed Cl(-) channel = ADP + phosphate + open Cl(-) channel.. The enzyme catalyses chloride(in) = chloride(out). It carries out the reaction hydrogencarbonate(in) = hydrogencarbonate(out). The catalysed reaction is ATP + H2O = ADP + phosphate + H(+). Functionally, epithelial ion channel that plays an important role in the regulation of epithelial ion and water transport and fluid homeostasis. Mediates the transport of chloride ions across the cell membrane. The ion channel is also permeable to HCO(3)(-); selectivity depends on the extracellular chloride concentration. Exerts its function also by modulating the activity of other ion channels and transporters. Contributes to the regulation of the pH and the ion content of the epithelial fluid layer. Modulates the activity of the epithelial sodium channel (ENaC) complex, in part by regulating the cell surface expression of the ENaC complex. May regulate bicarbonate secretion and salvage in epithelial cells by regulating the transporter SLC4A7. Can inhibit the chloride channel activity of ANO1. Plays a role in the chloride and bicarbonate homeostasis during sperm epididymal maturation and capacitation. This chain is Cystic fibrosis transmembrane conductance regulator, found in Atelerix albiventris (Middle-African hedgehog).